Consider the following 338-residue polypeptide: METKVKAHVAPWKIEEVKTLKGLIKSKPVVAIVDMMDVPAPQLQEIRDKIRDKVKLRMSRNTLIIRALKEAAEELNNPKLAELANYVERGAAILVTDMNPFKLYKLLEENKSPAPVRGGQIAPCDIKVEKGSTGMPPGPFLGELKSVGIPAAIEKGKIAIKEDKVVVKKGEVVSPKLAAVLDRLGIKPIKVGLNILAVYEDGIIYTPDVLKVDEEKLLADIQAAYQNAFNLAFNTAYPAKEVLPFLIQKAFINARALSVETAFVTKETAGDILAKAQAQALALASKLPDEALDEDIKAKLSSVEVSAAPAAEEEKEEEKKEEEKKEEDTGAAGLALLF.

Residues 303-338 (VEVSAAPAAEEEKEEEKKEEEKKEEDTGAAGLALLF) are disordered. Residues 317–328 (EEKKEEEKKEED) show a composition bias toward basic and acidic residues.

Belongs to the universal ribosomal protein uL10 family. Part of the 50S ribosomal subunit. Forms part of the ribosomal stalk which helps the ribosome interact with GTP-bound translation factors. Forms a heptameric L10(L12)2(L12)2(L12)2 complex, where L10 forms an elongated spine to which the L12 dimers bind in a sequential fashion.

In terms of biological role, forms part of the ribosomal stalk, playing a central role in the interaction of the ribosome with GTP-bound translation factors. In Methanocaldococcus jannaschii (strain ATCC 43067 / DSM 2661 / JAL-1 / JCM 10045 / NBRC 100440) (Methanococcus jannaschii), this protein is Large ribosomal subunit protein uL10.